The primary structure comprises 192 residues: GTP-dependent dephospho-CoA kinase (192 aa).

6 residues coordinate GTP: aspartate 49, valine 50, valine 51, aspartate 68, lysine 70, and glutamate 127.

This sequence belongs to the GTP-dependent DPCK family.

It carries out the reaction 3'-dephospho-CoA + GTP = GDP + CoA + H(+). It participates in cofactor biosynthesis; coenzyme A biosynthesis. Functionally, catalyzes the GTP-dependent phosphorylation of the 3'-hydroxyl group of dephosphocoenzyme A to form coenzyme A (CoA). This is GTP-dependent dephospho-CoA kinase from Halorubrum lacusprofundi (strain ATCC 49239 / DSM 5036 / JCM 8891 / ACAM 34).